Reading from the N-terminus, the 431-residue chain is Nuclear envelope integral membrane protein 1 (431 aa).

The N-terminal stretch at 1 to 29 (MAGEVEGEGCRVSWGVLVALLLLPLPSLC) is a signal peptide. 5 consecutive transmembrane segments (helical) span residues 151–171 (PRLFFVFLCGLLLFFYGDTLS), 175–195 (IFYYSTGITVGMLASMLILVF), 206–226 (PFVALLLGGWSVSIYVIQLVF), 236–256 (YWQYLLGYLGIVGFVSFAFCY), and 266–286 (SINILNWTLQLIGLLLMYISV). An a; required for its colocalization with lamins at the nuclear envelope region spans residues 176–287 (FYYSTGITVG…GLLLMYISVQ (112 aa)). A Nuclear localization signal motif is present at residues 317–325 (RKIKLKRGK). A b; required for interaction with ran region spans residues 326–395 (PSPPRLLTEE…LTPNEVSVHE (70 aa)). Residues 326–431 (PSPPRLLTEE…IEPVLYQDLR (106 aa)) form an interaction with banf1-a and banf1-b region. The tract at residues 368-375 (SRIQSPKR) is BAF-binding site (BBS); essential for interaction with banf1-a, banf1-b and ran.

Belongs to the NEMP family. In terms of assembly, homooligomer. Interacts with banf1-a and banf1-b. Interacts with ran-gtp. Phosphorylated.

It localises to the nucleus inner membrane. Its subcellular location is the nucleus envelope. In terms of biological role, in concert with ran, required for proper eye development. May be involved in the expression of early eye marker genes. Contributes to nuclear envelope stiffness in germ cells. Required for fertility. Essential for normal erythropoiesis. Required for efficient nuclear envelope opening and enucleation during the late stages of erythroblast maturation. The polypeptide is Nuclear envelope integral membrane protein 1 (nemp1) (Xenopus tropicalis (Western clawed frog)).